Reading from the N-terminus, the 128-residue chain is Ribosome-binding factor A (128 aa).

It belongs to the RbfA family. Monomer. Binds 30S ribosomal subunits, but not 50S ribosomal subunits or 70S ribosomes.

The protein localises to the cytoplasm. One of several proteins that assist in the late maturation steps of the functional core of the 30S ribosomal subunit. Associates with free 30S ribosomal subunits (but not with 30S subunits that are part of 70S ribosomes or polysomes). Required for efficient processing of 16S rRNA. May interact with the 5'-terminal helix region of 16S rRNA. The chain is Ribosome-binding factor A from Rippkaea orientalis (strain PCC 8801 / RF-1) (Cyanothece sp. (strain PCC 8801)).